Reading from the N-terminus, the 291-residue chain is Probable endonuclease 4 (291 aa).

Residues H72, H112, E147, D181, H184, H215, D228, H230, and E260 each coordinate Zn(2+).

It belongs to the AP endonuclease 2 family. The cofactor is Zn(2+).

It carries out the reaction Endonucleolytic cleavage to 5'-phosphooligonucleotide end-products.. Functionally, endonuclease IV plays a role in DNA repair. It cleaves phosphodiester bonds at apurinic or apyrimidinic (AP) sites, generating a 3'-hydroxyl group and a 5'-terminal sugar phosphate. This chain is Probable endonuclease 4, found in Mycoplasma genitalium (strain ATCC 33530 / DSM 19775 / NCTC 10195 / G37) (Mycoplasmoides genitalium).